Reading from the N-terminus, the 130-residue chain is Small ribosomal subunit protein uS11 (130 aa).

Belongs to the universal ribosomal protein uS11 family. In terms of assembly, part of the 30S ribosomal subunit. Interacts with proteins S7 and S18. Binds to IF-3.

Functionally, located on the platform of the 30S subunit, it bridges several disparate RNA helices of the 16S rRNA. Forms part of the Shine-Dalgarno cleft in the 70S ribosome. This Gluconobacter oxydans (strain 621H) (Gluconobacter suboxydans) protein is Small ribosomal subunit protein uS11.